The following is a 190-amino-acid chain: Molybdenum cofactor guanylyltransferase (190 aa).

Residues 8 to 10, Lys20, Asp64, and Asp98 each bind GTP; that span reads LAG. Asp98 provides a ligand contact to Mg(2+).

The protein belongs to the MobA family. As to quaternary structure, monomer. Requires Mg(2+) as cofactor.

It is found in the cytoplasm. It catalyses the reaction Mo-molybdopterin + GTP + H(+) = Mo-molybdopterin guanine dinucleotide + diphosphate. In terms of biological role, transfers a GMP moiety from GTP to Mo-molybdopterin (Mo-MPT) cofactor (Moco or molybdenum cofactor) to form Mo-molybdopterin guanine dinucleotide (Mo-MGD) cofactor. This is Molybdenum cofactor guanylyltransferase from Rhodobacter capsulatus (Rhodopseudomonas capsulata).